A 490-amino-acid chain; its full sequence is Glutamate--tRNA ligase (490 aa).

The short motif at 12–22 (PSPTGTPHVGL) is the 'HIGH' region element. Positions 256–260 (KLSKR) match the 'KMSKS' region motif. Lysine 259 is a binding site for ATP.

The protein belongs to the class-I aminoacyl-tRNA synthetase family. Glutamate--tRNA ligase type 1 subfamily. As to quaternary structure, monomer.

The protein resides in the cytoplasm. It catalyses the reaction tRNA(Glu) + L-glutamate + ATP = L-glutamyl-tRNA(Glu) + AMP + diphosphate. Catalyzes the attachment of glutamate to tRNA(Glu) in a two-step reaction: glutamate is first activated by ATP to form Glu-AMP and then transferred to the acceptor end of tRNA(Glu). This Mycobacterium sp. (strain JLS) protein is Glutamate--tRNA ligase.